The chain runs to 446 residues: Enolase (446 aa).

Position 42 (serine 42) interacts with Mg(2+). Phosphoserine is present on serine 42. The Pentapeptide insert signature appears at 104–108; that stretch reads EWGWS. Lysine 133 carries the N6-acetyllysine modification. Residue lysine 138 forms a Glycyl lysine isopeptide (Lys-Gly) (interchain with G-Cter in ubiquitin) linkage. At tyrosine 139 the chain carries Phosphotyrosine. Residues histidine 166 and glutamate 175 each coordinate substrate. The active-site Proton donor is the glutamate 218. A Mg(2+)-binding site is contributed by aspartate 253. The DKSLVK motif signature appears at 277–282; the sequence is DKSLVK. Mg(2+)-binding residues include glutamate 304 and aspartate 331. Substrate-binding residues include glutamate 304 and aspartate 331. The residue at position 339 (threonine 339) is a Phosphothreonine. The Proton acceptor role is filled by lysine 356. Lysine 375 is modified (N6-acetyllysine). Substrate is bound by residues 383–386 and lysine 407; that span reads SHRS.

It belongs to the enolase family. Homodimer. Forms a complex at least composed of DegP, ENO and HSP70. Interacts with G-actin. Interacts (via the DKSLVK motif) with mammalian host PLG/plasminogen (present in the mosquito blood meal); the interaction occurs at the ookinete cell surface and is required for ookinete invasion of the mosquito midgut. Interacts with A.gambiae EBP; depending on the Plasmodium species, the interaction is either involved in ookinete invasion of the mosquito midgut (P.berghei) or is dispensable (P.falciparum). Mg(2+) serves as cofactor.

The protein resides in the cytoplasm. The protein localises to the nucleus. It localises to the cytoskeleton. It is found in the cell surface. Its subcellular location is the cell membrane. The protein resides in the vacuole. It catalyses the reaction (2R)-2-phosphoglycerate = phosphoenolpyruvate + H2O. It functions in the pathway carbohydrate degradation; glycolysis; pyruvate from D-glyceraldehyde 3-phosphate: step 4/5. Functionally, glycolytic enzyme that catalyzes the conversion of 2-phosphoglycerate to phosphoenolpyruvate. In addition to glycolysis, involved in various processes such as parasite development and invasion. Plays an essential role during ookinete invasion of the mosquito vector midgut by mediating the interaction of the ookinete with the midgut epithelium and, further, by binding to mammalian host plasminogen in the blood meal, whose conversion to active plasmin promotes the invasion process. The polypeptide is Enolase (Plasmodium falciparum (isolate FCR-3 / Gambia)).